We begin with the raw amino-acid sequence, 271 residues long: Type III pantothenate kinase (271 aa).

6-13 (DVRNTNIV) serves as a coordination point for ATP. 109 to 112 (GADR) lines the substrate pocket. Aspartate 111 acts as the Proton acceptor in catalysis. Residue aspartate 131 coordinates K(+). Threonine 134 contacts ATP. Substrate is bound at residue threonine 186.

Belongs to the type III pantothenate kinase family. In terms of assembly, homodimer. NH4(+) serves as cofactor. It depends on K(+) as a cofactor.

It is found in the cytoplasm. The enzyme catalyses (R)-pantothenate + ATP = (R)-4'-phosphopantothenate + ADP + H(+). It functions in the pathway cofactor biosynthesis; coenzyme A biosynthesis; CoA from (R)-pantothenate: step 1/5. Functionally, catalyzes the phosphorylation of pantothenate (Pan), the first step in CoA biosynthesis. The sequence is that of Type III pantothenate kinase from Rhodococcus erythropolis (strain PR4 / NBRC 100887).